An 81-amino-acid polypeptide reads, in one-letter code: Large ribosomal subunit protein eL31 (81 aa).

This sequence belongs to the eukaryotic ribosomal protein eL31 family.

This chain is Large ribosomal subunit protein eL31 (rpl31e), found in Methanothermobacter thermautotrophicus (strain ATCC 29096 / DSM 1053 / JCM 10044 / NBRC 100330 / Delta H) (Methanobacterium thermoautotrophicum).